A 284-amino-acid chain; its full sequence is Small ribosomal subunit protein uS5z (284 aa).

Residues M1–F19 are compositionally biased toward basic and acidic residues. The tract at residues M1–T51 is disordered. Residues G20–G29 show a composition bias toward gly residues. An S5 DRBM domain is found at L95–V158.

The protein belongs to the universal ribosomal protein uS5 family.

This Arabidopsis thaliana (Mouse-ear cress) protein is Small ribosomal subunit protein uS5z (RPS2A).